Here is a 162-residue protein sequence, read N- to C-terminus: uncharacterized protein (162 aa).

The first 34 residues, 1–34 (MAREVISTSILMIATVVAVTAAIMVILPAVKDLA), serve as a signal peptide directing secretion.

This is an uncharacterized protein from Archaeoglobus fulgidus (strain ATCC 49558 / DSM 4304 / JCM 9628 / NBRC 100126 / VC-16).